The chain runs to 32 residues: Ribulose bisphosphate carboxylase/oxygenase activase, chloroplastic (32 aa).

The disordered stretch occupies residues 13–32 (FGALREGPPTFEQPAMTIEK).

Belongs to the RuBisCO activase family.

It localises to the plastid. It is found in the chloroplast stroma. Functionally, activation of RuBisCO (ribulose-1,5-bisphosphate carboxylase/oxygenase; EC 4.1.1.39) involves the ATP-dependent carboxylation of the epsilon-amino group of lysine leading to a carbamate structure. In Populus euphratica (Euphrates poplar), this protein is Ribulose bisphosphate carboxylase/oxygenase activase, chloroplastic.